We begin with the raw amino-acid sequence, 272 residues long: NH(3)-dependent NAD(+) synthetase (272 aa).

Residue 45 to 52 (GISGGQDS) participates in ATP binding. Asp-51 is a binding site for Mg(2+). Arg-138 lines the deamido-NAD(+) pocket. Thr-158 lines the ATP pocket. Glu-163 provides a ligand contact to Mg(2+). Deamido-NAD(+)-binding residues include Lys-171 and Asp-178. 2 residues coordinate ATP: Lys-187 and Thr-209. 258–259 (HK) serves as a coordination point for deamido-NAD(+).

The protein belongs to the NAD synthetase family. As to quaternary structure, homodimer.

The catalysed reaction is deamido-NAD(+) + NH4(+) + ATP = AMP + diphosphate + NAD(+) + H(+). It functions in the pathway cofactor biosynthesis; NAD(+) biosynthesis; NAD(+) from deamido-NAD(+) (ammonia route): step 1/1. Catalyzes the ATP-dependent amidation of deamido-NAD to form NAD. Uses ammonia as a nitrogen source. The protein is NH(3)-dependent NAD(+) synthetase of Bacillus cereus (strain ATCC 10987 / NRS 248).